A 383-amino-acid polypeptide reads, in one-letter code: Putative glutamate--cysteine ligase 2-1 (383 aa).

Belongs to the glutamate--cysteine ligase type 2 family. YbdK subfamily.

It catalyses the reaction L-cysteine + L-glutamate + ATP = gamma-L-glutamyl-L-cysteine + ADP + phosphate + H(+). Functionally, ATP-dependent carboxylate-amine ligase which exhibits weak glutamate--cysteine ligase activity. In Arthrobacter sp. (strain FB24), this protein is Putative glutamate--cysteine ligase 2-1.